The primary structure comprises 386 residues: 8-amino-7-oxononanoate synthase (386 aa).

Position 19 (R19) interacts with substrate. 106–107 is a binding site for pyridoxal 5'-phosphate; sequence GY. H131 lines the substrate pocket. S177, H205, and T233 together coordinate pyridoxal 5'-phosphate. Residue K236 is modified to N6-(pyridoxal phosphate)lysine. T350 contacts substrate.

It belongs to the class-II pyridoxal-phosphate-dependent aminotransferase family. BioF subfamily. In terms of assembly, homodimer. It depends on pyridoxal 5'-phosphate as a cofactor.

It catalyses the reaction 6-carboxyhexanoyl-[ACP] + L-alanine + H(+) = (8S)-8-amino-7-oxononanoate + holo-[ACP] + CO2. It functions in the pathway cofactor biosynthesis; biotin biosynthesis. In terms of biological role, catalyzes the decarboxylative condensation of pimeloyl-[acyl-carrier protein] and L-alanine to produce 8-amino-7-oxononanoate (AON), [acyl-carrier protein], and carbon dioxide. The protein is 8-amino-7-oxononanoate synthase of Alcanivorax borkumensis (strain ATCC 700651 / DSM 11573 / NCIMB 13689 / SK2).